Reading from the N-terminus, the 356-residue chain is UDP-N-acetylglucosamine--N-acetylmuramyl-(pentapeptide) pyrophosphoryl-undecaprenol N-acetylglucosamine transferase (356 aa).

Residues 12–14 (TGG), Asn-124, Arg-163, Ser-188, Ile-242, and Gln-287 each bind UDP-N-acetyl-alpha-D-glucosamine.

This sequence belongs to the glycosyltransferase 28 family. MurG subfamily.

Its subcellular location is the cell inner membrane. It catalyses the reaction di-trans,octa-cis-undecaprenyl diphospho-N-acetyl-alpha-D-muramoyl-L-alanyl-D-glutamyl-meso-2,6-diaminopimeloyl-D-alanyl-D-alanine + UDP-N-acetyl-alpha-D-glucosamine = di-trans,octa-cis-undecaprenyl diphospho-[N-acetyl-alpha-D-glucosaminyl-(1-&gt;4)]-N-acetyl-alpha-D-muramoyl-L-alanyl-D-glutamyl-meso-2,6-diaminopimeloyl-D-alanyl-D-alanine + UDP + H(+). It functions in the pathway cell wall biogenesis; peptidoglycan biosynthesis. In terms of biological role, cell wall formation. Catalyzes the transfer of a GlcNAc subunit on undecaprenyl-pyrophosphoryl-MurNAc-pentapeptide (lipid intermediate I) to form undecaprenyl-pyrophosphoryl-MurNAc-(pentapeptide)GlcNAc (lipid intermediate II). In Pseudomonas fluorescens (strain Pf0-1), this protein is UDP-N-acetylglucosamine--N-acetylmuramyl-(pentapeptide) pyrophosphoryl-undecaprenol N-acetylglucosamine transferase.